Here is a 364-residue protein sequence, read N- to C-terminus: Leucine dehydrogenase (364 aa).

K80 is an active-site residue. Residue 180–186 (GVGNVAY) coordinates NAD(+).

This sequence belongs to the Glu/Leu/Phe/Val dehydrogenases family.

The enzyme catalyses L-leucine + NAD(+) + H2O = 4-methyl-2-oxopentanoate + NH4(+) + NADH + H(+). It functions in the pathway amino-acid degradation; L-leucine degradation; 4-methyl-2-oxopentanoate from L-leucine (dehydrogenase route): step 1/1. Its function is as follows. Catalyzes the reversible deamination of L-leucine to 4-methyl-2-oxopentanoate. This chain is Leucine dehydrogenase (yqiT), found in Bacillus subtilis (strain 168).